Reading from the N-terminus, the 426-residue chain is Trigger factor (426 aa).

Residues Gly-165 to Pro-239 enclose the PPIase FKBP-type domain.

It belongs to the FKBP-type PPIase family. Tig subfamily.

Its subcellular location is the cytoplasm. The enzyme catalyses [protein]-peptidylproline (omega=180) = [protein]-peptidylproline (omega=0). Its function is as follows. Involved in protein export. Acts as a chaperone by maintaining the newly synthesized protein in an open conformation. Functions as a peptidyl-prolyl cis-trans isomerase. The protein is Trigger factor of Pelodictyon phaeoclathratiforme (strain DSM 5477 / BU-1).